A 486-amino-acid polypeptide reads, in one-letter code: L-arabinose isomerase (486 aa).

Positions 299, 324, 341, and 440 each coordinate Mn(2+).

The protein belongs to the arabinose isomerase family. Mn(2+) is required as a cofactor.

The catalysed reaction is beta-L-arabinopyranose = L-ribulose. The protein operates within carbohydrate degradation; L-arabinose degradation via L-ribulose; D-xylulose 5-phosphate from L-arabinose (bacterial route): step 1/3. Functionally, catalyzes the conversion of L-arabinose to L-ribulose. This Shouchella clausii (strain KSM-K16) (Alkalihalobacillus clausii) protein is L-arabinose isomerase.